The sequence spans 202 residues: Putative 5'(3')-deoxyribonucleotidase (202 aa).

The Nucleophile role is filled by aspartate 22. Positions 22, 24, and 156 each coordinate Mg(2+). The active-site Proton donor is the aspartate 24.

This sequence belongs to the 5'(3')-deoxyribonucleotidase family. Mg(2+) serves as cofactor.

Its function is as follows. Dephosphorylates the 5' and 2'(3')-phosphates of deoxyribonucleotides. The chain is Putative 5'(3')-deoxyribonucleotidase from Chlorobaculum tepidum (strain ATCC 49652 / DSM 12025 / NBRC 103806 / TLS) (Chlorobium tepidum).